The primary structure comprises 683 residues: Amphiphysin (683 aa).

Coiled-coil stretches lie at residues 10–83 and 144–191; these read AKNV…SLHE and DYDS…QEEL. The BAR domain maps to 24–240; it reads VLQKLGKADE…MTKLGDQHAD (217 aa). 3 disordered regions span residues 244–311, 421–443, and 455–599; these read SIQG…KVTP, AETE…AAAP, and EPKE…ASLS. Ser-252 carries the phosphoserine modification. At Thr-260 the chain carries Phosphothreonine. A compositionally biased stretch (pro residues) spans 261–274; the sequence is PSPPEEASPLPSPT. A phosphoserine mark is found at Ser-262, Ser-268, Ser-272, and Ser-276. Thr-280 is modified (phosphothreonine). 2 stretches are compositionally biased toward low complexity: residues 424 to 443 and 468 to 477; these read EQAL…AAAP and AGETVGTEGS. Ser-496 is subject to Phosphoserine. Over residues 539 to 559 the composition is skewed to basic and acidic residues; that stretch reads SNHEGEEHQETTTGTETREAT. A compositionally biased stretch (low complexity) spans 585 to 596; that stretch reads AATPAPAGAVDA. Residues 610–683 form the SH3 domain; the sequence is GFLYKVETLH…FPENFTRHLE (74 aa). Position 626 is a phosphoserine (Ser-626).

As to quaternary structure, heterodimer with BIN1. Binds SH3GLB1. Interacts with REPS1 and SGIP1. Binds AP2A2. Interacts with AP2B1. Interacts with DNM1 and SYNJ1.

The protein resides in the cytoplasmic vesicle. It localises to the secretory vesicle. The protein localises to the synaptic vesicle membrane. It is found in the cytoplasm. Its subcellular location is the cytoskeleton. In terms of biological role, may participate in mechanisms of regulated exocytosis in synapses and certain endocrine cell types. May control the properties of the membrane associated cytoskeleton. This Rattus norvegicus (Rat) protein is Amphiphysin (Amph).